A 237-amino-acid chain; its full sequence is Listeriolysin regulatory protein (237 aa).

One can recognise an HTH crp-type domain in the interval 137 to 212; sequence NGKLGSICGQ…NSCFYVQNLD (76 aa).

Positively regulates expression of listeriolysin, of 1-phosphadidylinositol phosphodiesterase (PI-PLC) and other virulence factors. This chain is Listeriolysin regulatory protein (prfA), found in Listeria monocytogenes serovar 1/2a (strain ATCC BAA-679 / EGD-e).